The sequence spans 60 residues: Large ribosomal subunit protein uL30 (60 aa).

The protein belongs to the universal ribosomal protein uL30 family. Part of the 50S ribosomal subunit.

This chain is Large ribosomal subunit protein uL30, found in Streptomyces griseus subsp. griseus (strain JCM 4626 / CBS 651.72 / NBRC 13350 / KCC S-0626 / ISP 5235).